A 242-amino-acid polypeptide reads, in one-letter code: Probable transcriptional regulatory protein lp_2253 (242 aa).

The interval 1–21 (MSGHSKWHNIQGRKNAQDAKR) is disordered.

Belongs to the TACO1 family.

The protein localises to the cytoplasm. The polypeptide is Probable transcriptional regulatory protein lp_2253 (Lactiplantibacillus plantarum (strain ATCC BAA-793 / NCIMB 8826 / WCFS1) (Lactobacillus plantarum)).